Consider the following 402-residue polypeptide: Phosphoglycerate kinase (402 aa).

Substrate is bound by residues 24–26 (DFN), Arg40, 63–66 (HFGR), Arg122, and Arg155. Residues Lys206, Gly297, Glu328, and 358 to 361 (GGDS) contribute to the ATP site.

Belongs to the phosphoglycerate kinase family. In terms of assembly, monomer.

It localises to the cytoplasm. The enzyme catalyses (2R)-3-phosphoglycerate + ATP = (2R)-3-phospho-glyceroyl phosphate + ADP. It functions in the pathway carbohydrate degradation; glycolysis; pyruvate from D-glyceraldehyde 3-phosphate: step 2/5. The protein is Phosphoglycerate kinase of Prochlorococcus marinus (strain MIT 9312).